Reading from the N-terminus, the 398-residue chain is Transcription termination factor 1, mitochondrial (398 aa).

The transit peptide at 1–57 directs the protein to the mitochondrion; that stretch reads MQSLSLGQTSISKGLNYLTIMAPGNLWHMRNNFLFGSRCWMTRFSAENIFKSVSFRL. Interaction with DNA stretches follow at residues 169–170, 246–250, 323–330, 354–357, and 383–390; these read RS, QSTKR, AEKKFNDK, SIST, and SKKRYEAK.

This sequence belongs to the mTERF family. As to quaternary structure, monomer. In terms of processing, phosphoprotein with mostly four phosphate groups. While the DNA-binding activity is unaffected by the phosphorylation state, only the phosphorylated form of the protein is active for termination activity. Functioning seems to be regulated by phosphorylation.

It is found in the mitochondrion. In terms of biological role, transcription termination factor. Binds to a 28 bp region within the tRNA(Leu(uur)) gene at a position immediately adjacent to and downstream of the 16S rRNA gene; this region comprises a tridecamer sequence critical for directing accurate termination. Binds DNA along the major grove and promotes DNA bending and partial unwinding. Promotes base flipping. Transcription termination activity appears to be polarized with highest specificity for transcripts initiated on the light strand. The protein is Transcription termination factor 1, mitochondrial (MTERF1) of Pongo abelii (Sumatran orangutan).